Here is a 91-residue protein sequence, read N- to C-terminus: UPF0250 protein PSEEN4821 (91 aa).

It belongs to the UPF0250 family.

This chain is UPF0250 protein PSEEN4821, found in Pseudomonas entomophila (strain L48).